A 330-amino-acid chain; its full sequence is GMP reductase (330 aa).

The active-site Thioimidate intermediate is the Cys-180. 209–232 (LIADGGIRHNGDIAKSVRFGASMV) is an NADP(+) binding site.

It belongs to the IMPDH/GMPR family. GuaC type 2 subfamily.

It catalyses the reaction IMP + NH4(+) + NADP(+) = GMP + NADPH + 2 H(+). Its function is as follows. Catalyzes the irreversible NADPH-dependent deamination of GMP to IMP. It functions in the conversion of nucleobase, nucleoside and nucleotide derivatives of G to A nucleotides, and in maintaining the intracellular balance of A and G nucleotides. This is GMP reductase from Lactobacillus gasseri (strain ATCC 33323 / DSM 20243 / BCRC 14619 / CIP 102991 / JCM 1131 / KCTC 3163 / NCIMB 11718 / NCTC 13722 / AM63).